Reading from the N-terminus, the 324-residue chain is Beta-ketoacyl-[acyl-carrier-protein] synthase III (324 aa).

Catalysis depends on residues Cys-112 and His-250. Positions 251–255 (QANIR) are ACP-binding. Residue Asn-280 is part of the active site.

It belongs to the thiolase-like superfamily. FabH family. As to quaternary structure, homodimer.

It localises to the cytoplasm. The catalysed reaction is malonyl-[ACP] + acetyl-CoA + H(+) = 3-oxobutanoyl-[ACP] + CO2 + CoA. It functions in the pathway lipid metabolism; fatty acid biosynthesis. In terms of biological role, catalyzes the condensation reaction of fatty acid synthesis by the addition to an acyl acceptor of two carbons from malonyl-ACP. Catalyzes the first condensation reaction which initiates fatty acid synthesis and may therefore play a role in governing the total rate of fatty acid production. Possesses both acetoacetyl-ACP synthase and acetyl transacylase activities. Its substrate specificity determines the biosynthesis of branched-chain and/or straight-chain of fatty acids. The sequence is that of Beta-ketoacyl-[acyl-carrier-protein] synthase III from Clostridium novyi (strain NT).